We begin with the raw amino-acid sequence, 340 residues long: Sterol-4-alpha-carboxylate 3-dehydrogenase erg26, decarboxylating (340 aa).

Tyr144 serves as the catalytic Proton acceptor. Lys148 serves as a coordination point for NAD(+).

This sequence belongs to the 3-beta-HSD family. In terms of assembly, heterotetramer of erg25, erg26, erg27 and erg28. Erg28 acts as a scaffold to tether erg27 and other 4,4-demethylation-related enzymes, forming a demethylation enzyme complex, in the endoplasmic reticulum.

The protein localises to the endoplasmic reticulum membrane. It carries out the reaction 4beta-methylzymosterol-4alpha-carboxylate + NADP(+) = 3-dehydro-4-methylzymosterol + CO2 + NADPH. It functions in the pathway steroid biosynthesis; zymosterol biosynthesis; zymosterol from lanosterol: step 4/6. Its pathway is steroid metabolism; ergosterol biosynthesis. In terms of biological role, sterol-4-alpha-carboxylate 3-dehydrogenase; part of the third module of ergosterol biosynthesis pathway that includes by the late steps of the pathway. Erg26 is a catalytic component of the C-4 demethylation complex that catalyzes the oxidative decarboxylation that results in a reduction of the 3-beta-hydroxy group at the C-3 carbon to an oxo group. The third module or late pathway involves the ergosterol synthesis itself through consecutive reactions that mainly occur in the endoplasmic reticulum (ER) membrane. Firstly, the squalene synthase erg9 catalyzes the condensation of 2 farnesyl pyrophosphate moieties to form squalene, which is the precursor of all steroids. Secondly, squalene is converted into lanosterol by the consecutive action of the squalene epoxidase erg1 and the lanosterol synthase erg7. The lanosterol 14-alpha-demethylase erg11/cyp1 catalyzes C14-demethylation of lanosterol to produce 4,4'-dimethyl cholesta-8,14,24-triene-3-beta-ol. In the next steps, a complex process involving various demethylation, reduction and desaturation reactions catalyzed by the C-14 reductase erg24 and the C-4 demethylation complex erg25-erg26-erg27 leads to the production of zymosterol. Erg28 likely functions in the C-4 demethylation complex reaction by tethering erg26 and Erg27 to the endoplasmic reticulum or to facilitate interaction between these proteins. Then, the sterol 24-C-methyltransferase erg6 catalyzes the methyl transfer from S-adenosyl-methionine to the C-24 of zymosterol to form fecosterol. The C-8 sterol isomerase erg2 catalyzes the reaction which results in unsaturation at C-7 in the B ring of sterols and thus converts fecosterol to episterol. The sterol-C5-desaturases erg31 and erg32 then catalyze the introduction of a C-5 double bond in the B ring to produce 5-dehydroepisterol. The C-22 sterol desaturase erg5 further converts 5-dehydroepisterol into ergosta-5,7,22,24(28)-tetraen-3beta-ol by forming the C-22(23) double bond in the sterol side chain. Finally, ergosta-5,7,22,24(28)-tetraen-3beta-ol is substrate of the C-24(28) sterol reductase erg4 to produce ergosterol. In the genus Schizosaccharomyces, a second route exists between lanosterol and fecosterol, via the methylation of lanosterol to eburicol by erg6, followed by C14-demethylation by erg11/cyp1 and C4-demethylation by the demethylation complex erg25-erg26-erg27. This chain is Sterol-4-alpha-carboxylate 3-dehydrogenase erg26, decarboxylating, found in Schizosaccharomyces pombe (strain 972 / ATCC 24843) (Fission yeast).